The following is a 1203-amino-acid chain: Metabotropic glutamate receptor 5 (1203 aa).

A signal peptide spans 1-20 (MVLLLILSVLLLKEDVRGSA). Residues 21–579 (QSSERRVVAH…QYLRWGDPEP (559 aa)) lie on the Extracellular side of the membrane. A disulfide bridge links C57 with C99. Y64 contributes to the L-glutamate binding site. An N-linked (GlcNAc...) asparagine glycan is attached at N88. Residues S151 and 172-174 (SAT) contribute to the L-glutamate site. An N-linked (GlcNAc...) asparagine glycan is attached at N209. Y222 is a binding site for L-glutamate. Cystine bridges form between C240-C529, C275-C277, C364-C380, C418-C425, C510-C530, C514-C533, C536-C548, and C551-C564. D304 lines the L-glutamate pocket. N-linked (GlcNAc...) asparagine glycans are attached at residues N377 and N381. K395 is a binding site for L-glutamate. N-linked (GlcNAc...) asparagine glycosylation occurs at N444. A helical transmembrane segment spans residues 580–602 (IAAVVFACLGLLATLFVTVIFII). The Cytoplasmic segment spans residues 603–612 (YRDTPVVKSS). The helical transmembrane segment at 613-635 (SRELCYIILAGICLGYLCTFCLI) threads the bilayer. Topologically, residues 636–643 (AKPKQIYC) are extracellular. Residues C643 and C732 are joined by a disulfide bond. A helical membrane pass occupies residues 644-666 (YLQRIGIGLSPAMSYSALVTKTN). Residues 667–692 (RIARILAGSKKKICTKKPRFMSACAQ) lie on the Cytoplasmic side of the membrane. A helical membrane pass occupies residues 693–713 (LVIAFILICIQLGIIVALFIM). At 714–736 (EPPDIMHDYPSIREVYLICNTTN) the chain is on the extracellular side. Residue N733 is glycosylated (N-linked (GlcNAc...) asparagine). A helical transmembrane segment spans residues 737–758 (LGVVTPLGYNGLLILSCTFYAF). The Cytoplasmic portion of the chain corresponds to 759–771 (KTRNVPANFNEAK). Residues 772-794 (YIAFTMYTTCIIWLAFVPIYFGS) form a helical membrane-spanning segment. Residues 795-797 (NYK) lie on the Extracellular side of the membrane. A helical transmembrane segment spans residues 798–819 (IITMCFSVSLSATVALGCMFVP). Residues 820-1203 (KVYIILAKPE…RDYTQSSSSL (384 aa)) lie on the Cytoplasmic side of the membrane. Position 860 is a phosphoserine (S860). R868 is subject to Omega-N-methylarginine. Disordered regions lie at residues 892–970 (FTPK…GSGP), 1003–1054 (EESF…GSLM), and 1122–1182 (GAQG…ALCI). Over residues 905 to 920 (TMSSSNGKSVTWAQNE) the composition is skewed to polar residues. Omega-N-methylarginine is present on R924. A compositionally biased stretch (low complexity) spans 1007-1017 (PAAARPRSPSP). Residues S1014 and S1016 each carry the phosphoserine modification. Composition is skewed to polar residues over residues 1039 to 1054 (HSETAARSSSSQGSLM) and 1165 to 1176 (DSGSTTPNSPVS).

Belongs to the G-protein coupled receptor 3 family. As to quaternary structure, interacts with RYR1, RYR2, ITPR1, SHANK1 and SHANK3. The PPXXF motif binds HOMER1, HOMER2 and HOMER3. Interacts with SIAH1 and TAMALIN. Interacts with NCDN. Interacts with NECAB2. Interacts with CAMK2A. As to expression, widely distributed in neuronal cells of the central nervous system.

Its subcellular location is the cell membrane. G-protein coupled receptor for glutamate. Ligand binding causes a conformation change that triggers signaling via guanine nucleotide-binding proteins (G proteins) and modulates the activity of down-stream effectors. Signaling activates a phosphatidylinositol-calcium second messenger system and generates a calcium-activated chloride current. Plays an important role in the regulation of synaptic plasticity and the modulation of the neural network activity. This is Metabotropic glutamate receptor 5 (Grm5) from Rattus norvegicus (Rat).